Reading from the N-terminus, the 70-residue chain is UPF0270 protein VS_2853 (70 aa).

Belongs to the UPF0270 family.

The protein is UPF0270 protein VS_2853 of Vibrio atlanticus (strain LGP32) (Vibrio splendidus (strain Mel32)).